We begin with the raw amino-acid sequence, 248 residues long: MWLGVVTLFPEMFRAVTDFGVTGRAVSNGLLELQTWNPRDFTHDKHRTVDDRPYGGGPGMLMMVQPLRDAIHAAKVAAGDKAKVIYLSPQGRKLTQQGVEELAKSERLILVCGRYEGIDERIIQTEVDEEWSIGDYVLSGGELPAMTLIDSVSRLVPGVLGKQASAEQDSFSDGLLDCPHYTRPESLDGIDVPAVLLSGNHENIRRWRLQQSLGRTLLRRPELFENLALTDEQTKLLAEFVNTAQAGE.

S-adenosyl-L-methionine-binding positions include glycine 113 and 133–138; that span reads IGDYVL.

It belongs to the RNA methyltransferase TrmD family. Homodimer.

It localises to the cytoplasm. The enzyme catalyses guanosine(37) in tRNA + S-adenosyl-L-methionine = N(1)-methylguanosine(37) in tRNA + S-adenosyl-L-homocysteine + H(+). Its function is as follows. Specifically methylates guanosine-37 in various tRNAs. This is tRNA (guanine-N(1)-)-methyltransferase from Shewanella loihica (strain ATCC BAA-1088 / PV-4).